A 457-amino-acid chain; its full sequence is Zinc finger protein ZPR1 (457 aa).

Over residues 1–13 (MSTVSDPNSSNPP) the composition is skewed to polar residues. Positions 1–21 (MSTVSDPNSSNPPESAGNIRP) are disordered. 2 C4-type zinc fingers span residues 43 to 75 (CMNC…CDHC) and 261 to 293 (CPSC…CGAC). The interval 414–457 (VQSLSDDDSEPDDKLTVERYDRSYEDNEDLGLNDMKTEGYEEKA) is disordered. 2 stretches are compositionally biased toward basic and acidic residues: residues 425 to 438 (DDKL…RSYE) and 448 to 457 (MKTEGYEEKA).

It belongs to the ZPR1 family.

Functionally, might mediate EGFR and FGFR signal transduction cascades required for lumen formation in tracheal cells. This is Zinc finger protein ZPR1 from Drosophila melanogaster (Fruit fly).